We begin with the raw amino-acid sequence, 295 residues long: Bifunctional protein FolD (295 aa).

NADP(+) is bound by residues 163-165, Ser188, and Ile229; that span reads GRS.

Belongs to the tetrahydrofolate dehydrogenase/cyclohydrolase family. In terms of assembly, homodimer.

The catalysed reaction is (6R)-5,10-methylene-5,6,7,8-tetrahydrofolate + NADP(+) = (6R)-5,10-methenyltetrahydrofolate + NADPH. It carries out the reaction (6R)-5,10-methenyltetrahydrofolate + H2O = (6R)-10-formyltetrahydrofolate + H(+). It participates in one-carbon metabolism; tetrahydrofolate interconversion. Its function is as follows. Catalyzes the oxidation of 5,10-methylenetetrahydrofolate to 5,10-methenyltetrahydrofolate and then the hydrolysis of 5,10-methenyltetrahydrofolate to 10-formyltetrahydrofolate. The sequence is that of Bifunctional protein FolD from Hyphomonas neptunium (strain ATCC 15444).